A 194-amino-acid polypeptide reads, in one-letter code: Imidazoleglycerol-phosphate dehydratase (194 aa).

This sequence belongs to the imidazoleglycerol-phosphate dehydratase family.

It is found in the cytoplasm. The enzyme catalyses D-erythro-1-(imidazol-4-yl)glycerol 3-phosphate = 3-(imidazol-4-yl)-2-oxopropyl phosphate + H2O. It functions in the pathway amino-acid biosynthesis; L-histidine biosynthesis; L-histidine from 5-phospho-alpha-D-ribose 1-diphosphate: step 6/9. The protein is Imidazoleglycerol-phosphate dehydratase of Rubrobacter xylanophilus (strain DSM 9941 / JCM 11954 / NBRC 16129 / PRD-1).